We begin with the raw amino-acid sequence, 206 residues long: Casparian strip membrane protein 1 (206 aa).

Residue alanine 2 is modified to N-acetylalanine. The Cytoplasmic segment spans residues 2–43; the sequence is AKESTTIDVGEPSTVTKSSSHVVKDAKKKGFVAVASRGGAKR. A helical transmembrane segment spans residues 44-64; sequence GLAIFDFLLRLAAIAVTIGAA. The Extracellular segment spans residues 65 to 95; it reads SVMYTAEETLPFFTQFLQFQAGYDDLPAFQY. The chain crosses the membrane as a helical span at residues 96-116; sequence FVIAVAVVASYLVLSLPFSIV. The Cytoplasmic portion of the chain corresponds to 117 to 127; it reads SIVRPHAVAPR. A helical membrane pass occupies residues 128–148; that stretch reads LILLICDTLVVTLNTSAAAAA. Residues 149–180 lie on the Extracellular side of the membrane; it reads ASITYLAHNGNQSTNWLPICQQFGDFCQNVST. N-linked (GlcNAc...) asparagine glycans are attached at residues asparagine 159 and asparagine 177. The helical transmembrane segment at 181–201 threads the bilayer; it reads AVVADSIAILFFIVLIIISAI. The Cytoplasmic portion of the chain corresponds to 202 to 206; the sequence is ALKRH.

The protein belongs to the Casparian strip membrane proteins (CASP) family. In terms of assembly, homodimer and heterodimers with other CASP proteins. Interacts with CASP2, CASP3, CASP4 and CASP5.

It localises to the cell membrane. In terms of biological role, regulates membrane-cell wall junctions and localized cell wall deposition. Required for establishment of the Casparian strip membrane domain (CSD) and the subsequent formation of Casparian strips, a cell wall modification of the root endodermis that determines an apoplastic barrier between the intraorganismal apoplasm and the extraorganismal apoplasm and prevents lateral diffusion. This is Casparian strip membrane protein 1 (CASP1) from Arabidopsis thaliana (Mouse-ear cress).